Consider the following 209-residue polypeptide: Type III pantothenate kinase (209 aa).

Position 5-12 (5-12) interacts with ATP; it reads DIGNSNAN. Residues tyrosine 68 and 72–75 each bind substrate; that span reads GIDR. Catalysis depends on aspartate 74, which acts as the Proton acceptor. Aspartate 89 lines the K(+) pocket. Residue serine 92 participates in ATP binding. Threonine 144 serves as a coordination point for substrate.

Belongs to the type III pantothenate kinase family. In terms of assembly, homodimer. It depends on NH4(+) as a cofactor. Requires K(+) as cofactor.

The protein localises to the cytoplasm. The catalysed reaction is (R)-pantothenate + ATP = (R)-4'-phosphopantothenate + ADP + H(+). The protein operates within cofactor biosynthesis; coenzyme A biosynthesis; CoA from (R)-pantothenate: step 1/5. Its function is as follows. Catalyzes the phosphorylation of pantothenate (Pan), the first step in CoA biosynthesis. This Campylobacter jejuni subsp. jejuni serotype O:2 (strain ATCC 700819 / NCTC 11168) protein is Type III pantothenate kinase.